Reading from the N-terminus, the 417-residue chain is Hydrogen cyanide synthase subunit HcnC (417 aa).

Residues 1–18 (MNRTYDIVIAGGGVIGAS) form the signal peptide. Residue 7-21 (IVIAGGGVIGASCAY) participates in FAD binding. Cys-19 carries the N-palmitoyl cysteine lipid modification. The S-diacylglycerol cysteine moiety is linked to residue Cys-19. A helical transmembrane segment spans residues 46-66 (SAGGLWAIGESVGLGCGVIFF).

The protein belongs to the FAD-dependent glycerol-3-phosphate dehydrogenase family. As to quaternary structure, heterotrimer of HcnA, HcnB and HcnC. Requires FAD as cofactor.

Its subcellular location is the cell membrane. It catalyses the reaction glycine + 2 A = hydrogen cyanide + 2 AH2 + CO2. With respect to regulation, oxygen is necessary for cyanogenesis. Activated by succinate, glycine methyl ester, glucose and D,L-methionine in addition to glycine. Phenazine methosulfate, methylene blue, 2,6-dichlorophenolindophenol (DCIP) and ferricyanide can replace oxygen for the reaction. Inhibited by pyrrolnitrin and acriflavine at 1 mM concentration. Its function is as follows. A three-component membrane-bound flavoenzyme that catalyzes the formation of hydrogen cyanide, a secondary metabolite, by transfer of electrons to a cyanide-resistant branch of the aerobic respiratory chain. The chain is Hydrogen cyanide synthase subunit HcnC from Pseudomonas aeruginosa (strain ATCC 15692 / DSM 22644 / CIP 104116 / JCM 14847 / LMG 12228 / 1C / PRS 101 / PAO1).